A 288-amino-acid polypeptide reads, in one-letter code: Bifunctional protein FolD (288 aa).

NADP(+) is bound by residues 166 to 168 (GRS), Ser-191, and Ile-232.

It belongs to the tetrahydrofolate dehydrogenase/cyclohydrolase family. In terms of assembly, homodimer.

The enzyme catalyses (6R)-5,10-methylene-5,6,7,8-tetrahydrofolate + NADP(+) = (6R)-5,10-methenyltetrahydrofolate + NADPH. The catalysed reaction is (6R)-5,10-methenyltetrahydrofolate + H2O = (6R)-10-formyltetrahydrofolate + H(+). It functions in the pathway one-carbon metabolism; tetrahydrofolate interconversion. In terms of biological role, catalyzes the oxidation of 5,10-methylenetetrahydrofolate to 5,10-methenyltetrahydrofolate and then the hydrolysis of 5,10-methenyltetrahydrofolate to 10-formyltetrahydrofolate. In Rickettsia rickettsii (strain Iowa), this protein is Bifunctional protein FolD.